The sequence spans 363 residues: 3-isopropylmalate dehydrogenase A (363 aa).

78 to 89 contributes to the NAD(+) binding site; that stretch reads GPKWGTGAVRPE. Substrate is bound by residues R96, R106, R135, and D222. Residues D222, D247, and D251 each contribute to the Mg(2+) site. Position 287–299 (287–299) interacts with NAD(+); sequence GSAPDIAGKGIVN.

It belongs to the isocitrate and isopropylmalate dehydrogenases family. Homodimer. Mg(2+) serves as cofactor. It depends on Mn(2+) as a cofactor.

The protein resides in the cytoplasm. It catalyses the reaction (2R,3S)-3-isopropylmalate + NAD(+) = 4-methyl-2-oxopentanoate + CO2 + NADH. The protein operates within amino-acid biosynthesis; L-leucine biosynthesis; L-leucine from 3-methyl-2-oxobutanoate: step 3/4. Functionally, catalyzes the oxidation of 3-carboxy-2-hydroxy-4-methylpentanoate (3-isopropylmalate) to 3-carboxy-4-methyl-2-oxopentanoate. The product decarboxylates to 4-methyl-2 oxopentanoate. This is 3-isopropylmalate dehydrogenase A (leu2A) from Aspergillus niger.